We begin with the raw amino-acid sequence, 533 residues long: Probable polyamine oxidase 5 (533 aa).

Residues Glu-37, Arg-45, Val-262, and Glu-501 each contribute to the FAD site.

This sequence belongs to the flavin monoamine oxidase family. Requires FAD as cofactor. Expressed in root vasculature, leaves and stems.

Its subcellular location is the cytoplasm. The enzyme catalyses spermine + O2 + H2O = 3-aminopropanal + spermidine + H2O2. It carries out the reaction N(1)-acetylspermine + O2 + H2O = 3-acetamidopropanal + spermidine + H2O2. The catalysed reaction is norspermine + O2 + H2O = norspermidine + 3-aminopropanal + H2O2. It catalyses the reaction thermospermine + O2 + H2O = 3-aminopropanal + spermidine + H2O2. The protein operates within amine and polyamine degradation; spermine degradation. Flavoenzyme involved in polyamine back-conversion. Catalyzes the oxidation of the secondary amino group of polyamines, such as spermine and its acetyl derivatives. Substrate preference is spermine &gt; N(1)-acetylspermine &gt; thermospermine &gt; norspermine. Plays an important role in the regulation of polyamine intracellular concentration. Involved in xylem differentiation by controlling thermospermine homeostasis, and participating in the tightly controlled interplay between auxin and cytokinin that is necessary for proper xylem differentiation. Involved in the production of hydrogen peroxide in response to salt and cold stresses. The polypeptide is Probable polyamine oxidase 5 (Arabidopsis thaliana (Mouse-ear cress)).